We begin with the raw amino-acid sequence, 404 residues long: NADH-quinone oxidoreductase subunit D 2 (404 aa).

The protein belongs to the complex I 49 kDa subunit family. As to quaternary structure, NDH-1 is composed of 14 different subunits. Subunits NuoB, C, D, E, F, and G constitute the peripheral sector of the complex.

The protein resides in the cell inner membrane. It carries out the reaction a quinone + NADH + 5 H(+)(in) = a quinol + NAD(+) + 4 H(+)(out). In terms of biological role, NDH-1 shuttles electrons from NADH, via FMN and iron-sulfur (Fe-S) centers, to quinones in the respiratory chain. The immediate electron acceptor for the enzyme in this species is believed to be ubiquinone. Couples the redox reaction to proton translocation (for every two electrons transferred, four hydrogen ions are translocated across the cytoplasmic membrane), and thus conserves the redox energy in a proton gradient. This Rhizobium etli (strain CIAT 652) protein is NADH-quinone oxidoreductase subunit D 2.